A 517-amino-acid chain; its full sequence is RNA-binding region-containing protein 3 (517 aa).

The disordered stretch occupies residues 1-26; it reads MAAPEQPLAISRGCTSSSSLSPPRGD. Residues 1 to 257 form a necessary for interaction with PDCD7 region; sequence MAAPEQPLAI…STDDEDRQRM (257 aa). Residue Ser-21 is modified to Phosphoserine. One can recognise an RRM 1 domain in the interval 27-102; sequence RTLLVRHLPA…HTLVVEFAKE (76 aa). Disordered stretches follow at residues 106–130 and 213–254; these read VHSP…DDKE and MPLH…DEDR. Ser-108 is subject to Phosphoserine. The segment covering 115–130 has biased composition (basic and acidic residues); sequence SEKKKRSDDPVEDDKE. A necessary for binding to m(7)G-capped U12 snRNA region spans residues 211–380; it reads DYMPLHAPLP…LDITEEIKED (170 aa). The segment covering 217–230 has biased composition (pro residues); it reads APLPPTSPQPPEEP. The segment covering 231–252 has biased composition (acidic residues); that stretch reads PLPDEDEELSSEESEYESTDDE. The 84-residue stretch at 420-503 folds into the RRM 2 domain; it reads CRIYVKNLAK…KPMVVQFARS (84 aa).

In terms of assembly, component of the U11/U12 snRNPs that are part of the U12-type spliceosome. Found in a complex with m(7)G-capped U12 snRNA. Interacts with PDCD7. Highly expressed in pancreas and kidney. Detected at lower levels in heart, brain, placenta, lung, liver, spleen, thymus, prostate, testis, ovary, small intestine, colon and leukocytes.

It is found in the nucleus. Its function is as follows. Participates in pre-mRNA U12-dependent splicing, performed by the minor spliceosome which removes U12-type introns. U12-type introns comprises less than 1% of all non-coding sequences. Binds to the 3'-stem-loop of m(7)G-capped U12 snRNA. This is RNA-binding region-containing protein 3 (RNPC3) from Homo sapiens (Human).